The sequence spans 327 residues: uncharacterized protein (327 aa).

This is an uncharacterized protein from Lepidoptera (butterflies and moths).